The following is a 346-amino-acid chain: Beta-hexosaminidase (346 aa).

Substrate is bound by residues Asp62, Arg70, Arg134, and 164–165 (KH). The active-site Proton donor/acceptor is His177. The active-site Nucleophile is the Asp249.

It belongs to the glycosyl hydrolase 3 family. NagZ subfamily.

Its subcellular location is the cytoplasm. It catalyses the reaction Hydrolysis of terminal non-reducing N-acetyl-D-hexosamine residues in N-acetyl-beta-D-hexosaminides.. Its pathway is cell wall biogenesis; peptidoglycan recycling. Plays a role in peptidoglycan recycling by cleaving the terminal beta-1,4-linked N-acetylglucosamine (GlcNAc) from peptide-linked peptidoglycan fragments, giving rise to free GlcNAc, anhydro-N-acetylmuramic acid and anhydro-N-acetylmuramic acid-linked peptides. This Actinobacillus succinogenes (strain ATCC 55618 / DSM 22257 / CCUG 43843 / 130Z) protein is Beta-hexosaminidase.